A 349-amino-acid chain; its full sequence is Nicotinate-nucleotide--dimethylbenzimidazole phosphoribosyltransferase (349 aa).

Glu-318 acts as the Proton acceptor in catalysis.

Belongs to the CobT family.

It catalyses the reaction 5,6-dimethylbenzimidazole + nicotinate beta-D-ribonucleotide = alpha-ribazole 5'-phosphate + nicotinate + H(+). It participates in nucleoside biosynthesis; alpha-ribazole biosynthesis; alpha-ribazole from 5,6-dimethylbenzimidazole: step 1/2. In terms of biological role, catalyzes the synthesis of alpha-ribazole-5'-phosphate from nicotinate mononucleotide (NAMN) and 5,6-dimethylbenzimidazole (DMB). This chain is Nicotinate-nucleotide--dimethylbenzimidazole phosphoribosyltransferase, found in Alkaliphilus metalliredigens (strain QYMF).